The primary structure comprises 551 residues: Glucans biosynthesis protein D (551 aa).

Residues 1 to 32 (MDRRRFIKGSMAMAAVCGTSGIASLFSQAAFA) constitute a signal peptide (tat-type signal).

It belongs to the OpgD/OpgG family. Post-translationally, predicted to be exported by the Tat system. The position of the signal peptide cleavage has not been experimentally proven.

The protein resides in the periplasm. Its pathway is glycan metabolism; osmoregulated periplasmic glucan (OPG) biosynthesis. In terms of biological role, probably involved in the control of the structural glucose backbone of osmoregulated periplasmic glucans (OPGs). This Escherichia coli O9:H4 (strain HS) protein is Glucans biosynthesis protein D.